The primary structure comprises 1032 residues: Protein translocase subunit SecA (1032 aa).

ATP contacts are provided by residues glutamine 121, glycine 139–threonine 143, and aspartate 570. A disordered region spans residues threonine 945 to alanine 975. Zn(2+)-binding residues include cysteine 994, cysteine 996, cysteine 1005, and histidine 1006.

Belongs to the SecA family. Monomer and homodimer. Part of the essential Sec protein translocation apparatus which comprises SecA, SecYEG and auxiliary proteins SecDF. Other proteins may also be involved. Zn(2+) serves as cofactor.

The protein localises to the cell membrane. Its subcellular location is the cytoplasm. The catalysed reaction is ATP + H2O + cellular proteinSide 1 = ADP + phosphate + cellular proteinSide 2.. In terms of biological role, part of the Sec protein translocase complex. Interacts with the SecYEG preprotein conducting channel. Has a central role in coupling the hydrolysis of ATP to the transfer of proteins into and across the cell membrane, serving as an ATP-driven molecular motor driving the stepwise translocation of polypeptide chains across the membrane. The sequence is that of Protein translocase subunit SecA from Herpetosiphon aurantiacus (strain ATCC 23779 / DSM 785 / 114-95).